Here is an 853-residue protein sequence, read N- to C-terminus: DNA mismatch repair protein MutS (853 aa).

614 to 621 (GPNMGGKS) contacts ATP.

The protein belongs to the DNA mismatch repair MutS family.

This protein is involved in the repair of mismatches in DNA. It is possible that it carries out the mismatch recognition step. This protein has a weak ATPase activity. The sequence is that of DNA mismatch repair protein MutS from Klebsiella pneumoniae subsp. pneumoniae (strain ATCC 700721 / MGH 78578).